The chain runs to 171 residues: Small ribosomal subunit protein uS5 (171 aa).

The 64-residue stretch at 15 to 78 folds into the S5 DRBM domain; it reads LEEKVVKINR…EKAKKQLVRI (64 aa).

Belongs to the universal ribosomal protein uS5 family. As to quaternary structure, part of the 30S ribosomal subunit. Contacts proteins S4 and S8.

Its function is as follows. With S4 and S12 plays an important role in translational accuracy. In terms of biological role, located at the back of the 30S subunit body where it stabilizes the conformation of the head with respect to the body. The protein is Small ribosomal subunit protein uS5 of Onion yellows phytoplasma (strain OY-M).